The sequence spans 427 residues: D-inositol 3-phosphate glycosyltransferase 2 (427 aa).

His14 is a binding site for 1D-myo-inositol 3-phosphate. UDP-N-acetyl-alpha-D-glucosamine is bound by residues 20–21 (QP) and Gly28. Residues 25 to 30 (DAGGMN), Lys83, Tyr116, Thr140, and Arg160 contribute to the 1D-myo-inositol 3-phosphate site. Arg234, Lys239, and Val300 together coordinate UDP-N-acetyl-alpha-D-glucosamine. Residues Tyr309, Arg310, and Ala312 each contribute to the Mg(2+) site. Glu322 and Glu330 together coordinate UDP-N-acetyl-alpha-D-glucosamine. Position 336 (Thr336) interacts with Mg(2+).

This sequence belongs to the glycosyltransferase group 1 family. MshA subfamily. As to quaternary structure, homodimer.

It catalyses the reaction 1D-myo-inositol 3-phosphate + UDP-N-acetyl-alpha-D-glucosamine = 1D-myo-inositol 2-acetamido-2-deoxy-alpha-D-glucopyranoside 3-phosphate + UDP + H(+). Its function is as follows. Catalyzes the transfer of a N-acetyl-glucosamine moiety to 1D-myo-inositol 3-phosphate to produce 1D-myo-inositol 2-acetamido-2-deoxy-glucopyranoside 3-phosphate in the mycothiol biosynthesis pathway. The chain is D-inositol 3-phosphate glycosyltransferase 2 from Catenulispora acidiphila (strain DSM 44928 / JCM 14897 / NBRC 102108 / NRRL B-24433 / ID139908).